The sequence spans 516 residues: MSGINGAGPSNFFWRWRADDEPVTERERDSSSGANLTNSPQLRPESPTVSGRRLLRSNALSRQTREWQETTSASAERATPPVEPRQPPEAQPAERIVAERIVQELVRAGANLNNVRTMLRNVMDNNAVAFSRVEWNILLQHFPDMHTNGISSDSVLANELRQTLRQVVHQQRTQRALAPILSPAPSRPVASSSRSSQRTLLGRFTGWMAPRQTSSSSQATSSTSVDRHPQDLNQLESLRLADAERRNRSANQTDTDEALRRLTQAGVDMERLSTSLGRYIHSFQPAPPDLRRLLESVGIDPDIPEELTLVNNPVLNLNVALNRMLASRQATTESSSVFPSRAGDTRVRTLPVMPEREDNENNVAYGVRLLRLNPEAEVERVVEAFITDPSSRPEVVADIHAVLRSITSQFRQLRTISKADAESQDFRDAADYPDDPTSCLFGEDLSLSNPHQQVIGLAGESTDILQPYSQEGNKALRFMDMKKLAEHLASKPVHPMNRDRLDDKNIAGYAFRVVPD.

Disordered regions lie at residues 1–93 (MSGI…AQPA) and 175–259 (RALA…DEAL). Residues 16–30 (WRADDEPVTERERDS) are compositionally biased toward basic and acidic residues. A compositionally biased stretch (polar residues) spans 31 to 41 (SSGANLTNSPQ). Pro residues predominate over residues 81–90 (PVEPRQPPEA). 2 stretches are compositionally biased toward low complexity: residues 183–196 (PAPS…SRSS) and 212–224 (QTSS…SSTS).

Belongs to the HopAB family.

Its subcellular location is the secreted. Effector protein that plays different roles depending on the species and plant cultivars that interact with the pathogen. Acts as a virulence determinant by enhancing the development of disease symptoms and bacterial growth. Acts as an avirulence factor by eliciting hypersensitive response (HR) and plant resistance. This chain is Effector protein hopAB1 (hopAB1), found in Pseudomonas syringae pv. syringae (strain B728a).